We begin with the raw amino-acid sequence, 413 residues long: N-acylneuraminate cytidylyltransferase (413 aa).

It belongs to the CMP-NeuNAc synthase family. It depends on Mg(2+) as a cofactor. The cofactor is Mn(2+).

The protein resides in the cytoplasm. It carries out the reaction an N-acylneuraminate + CTP = a CMP-N-acyl-beta-neuraminate + diphosphate. Catalyzes the formation of CMP-N-acetylneuraminic acid (CMP-NeuNAc), which is essential for the formation of the capsule. This is N-acylneuraminate cytidylyltransferase (neuA) from Streptococcus agalactiae serotype Ia (strain ATCC 27591 / A909 / CDC SS700).